We begin with the raw amino-acid sequence, 215 residues long: Probable GTP-binding protein EngB (215 aa).

Positions 26-200 (EGIEVAFAGR…RAKLDEWFAP (175 aa)) constitute an EngB-type G domain. GTP contacts are provided by residues 34-41 (GRSNAGKS), 61-65 (GRTQL), 79-82 (DLPG), 146-149 (TKAD), and 179-181 (FSS). Mg(2+) contacts are provided by Ser-41 and Thr-63.

This sequence belongs to the TRAFAC class TrmE-Era-EngA-EngB-Septin-like GTPase superfamily. EngB GTPase family. The cofactor is Mg(2+).

Functionally, necessary for normal cell division and for the maintenance of normal septation. The polypeptide is Probable GTP-binding protein EngB (Aliivibrio fischeri (strain ATCC 700601 / ES114) (Vibrio fischeri)).